The sequence spans 55 residues: MVKLSKEAKQRLQQLFKGSQFAIRWGFIPLVIYLGFKRGADPGMPEPTVLSLLWG.

At methionine 1–glutamine 20 the chain is on the cytoplasmic side. A helical transmembrane segment spans residues phenylalanine 21–phenylalanine 36. Topologically, residues lysine 37–glycine 55 are mitochondrial intermembrane.

The protein belongs to the Tom7 family. As to quaternary structure, forms part of the preprotein translocase complex of the outer mitochondrial membrane (TOM complex) which consists of at least 7 different proteins (TOMM5, TOMM6, TOMM7, TOMM20, TOMM22, TOMM40 and TOMM70).

The protein resides in the mitochondrion outer membrane. Required for assembly and stability of the TOM complex. Positive regulator of PRKN translocation to damaged mitochondria. Acts probably by stabilizing PINK1 on the outer membrane of depolarized mitochondria. The chain is Mitochondrial import receptor subunit TOM7 homolog (TOMM7) from Homo sapiens (Human).